We begin with the raw amino-acid sequence, 198 residues long: Prolactin (198 aa).

3 disulfides stabilise this stretch: Cys4–Cys11, Cys58–Cys173, and Cys190–Cys198.

It belongs to the somatotropin/prolactin family. In terms of tissue distribution, pituitary gland.

It localises to the secreted. The sequence is that of Prolactin from Chelonia mydas (Green sea-turtle).